A 1254-amino-acid polypeptide reads, in one-letter code: DNA-directed RNA polymerase subunit beta' (1254 aa).

4 residues coordinate Zn(2+): Cys-59, Cys-61, Cys-76, and Cys-79. Mg(2+) contacts are provided by Asp-501, Asp-503, and Asp-505. Zn(2+) is bound by residues Cys-871, Cys-946, Cys-953, and Cys-956.

Belongs to the RNA polymerase beta' chain family. As to quaternary structure, the RNAP catalytic core consists of 2 alpha, 1 beta, 1 beta' and 1 omega subunit. When a sigma factor is associated with the core the holoenzyme is formed, which can initiate transcription. The cofactor is Mg(2+). It depends on Zn(2+) as a cofactor.

It catalyses the reaction RNA(n) + a ribonucleoside 5'-triphosphate = RNA(n+1) + diphosphate. Its function is as follows. DNA-dependent RNA polymerase catalyzes the transcription of DNA into RNA using the four ribonucleoside triphosphates as substrates. The protein is DNA-directed RNA polymerase subunit beta' of Mesoplasma florum (strain ATCC 33453 / NBRC 100688 / NCTC 11704 / L1) (Acholeplasma florum).